The sequence spans 521 residues: Probable protein kinase UbiB (521 aa).

In terms of domain architecture, Protein kinase spans 119–497 (QFDETPIASA…QKRTNRLLQT (379 aa)). ATP is bound by residues 125-133 (IASASIAQV) and K151. The active-site Proton acceptor is the D286. The chain crosses the membrane as a helical span at residues 496 to 516 (QTIIYGGIGFVLGLLAMQLLV).

This sequence belongs to the ABC1 family. UbiB subfamily.

The protein localises to the cell inner membrane. The protein operates within cofactor biosynthesis; ubiquinone biosynthesis [regulation]. Functionally, is probably a protein kinase regulator of UbiI activity which is involved in aerobic coenzyme Q (ubiquinone) biosynthesis. In Variovorax paradoxus (strain S110), this protein is Probable protein kinase UbiB.